Here is a 145-residue protein sequence, read N- to C-terminus: Toxin Res (145 aa).

It belongs to the MbcT/ParT/Res family. As to quaternary structure, homodimer. Forms a complex with cognate antitoxin Xre; the 2 toxin molecules dimerize and each contacts an Xre homodimer. Most Res-Xre contacts are between the antitoxin molecule closest to the toxin.

Its function is as follows. Toxic component of a type II toxin-antitoxin (TA) system. Expression in E.coli inhibits cell growth. In vivo it is probably neutralized by cognate antitoxin Xre; this has not been shown upon expression in E.coli. Probably depletes intracellular NAD(+). The chain is Toxin Res from Pseudomonas putida (strain ATCC 47054 / DSM 6125 / CFBP 8728 / NCIMB 11950 / KT2440).